A 938-amino-acid chain; its full sequence is Isoleucine--tRNA ligase (938 aa).

Residues 58-68 carry the 'HIGH' region motif; it reads PYANGSIHIGH. Residue Glu561 participates in L-isoleucyl-5'-AMP binding. The 'KMSKS' region motif lies at 602 to 606; that stretch reads KMSKS. Lys605 serves as a coordination point for ATP. Zn(2+) contacts are provided by Cys901, Cys904, Cys921, and Cys924.

The protein belongs to the class-I aminoacyl-tRNA synthetase family. IleS type 1 subfamily. As to quaternary structure, monomer. Zn(2+) is required as a cofactor.

It localises to the cytoplasm. The enzyme catalyses tRNA(Ile) + L-isoleucine + ATP = L-isoleucyl-tRNA(Ile) + AMP + diphosphate. In terms of biological role, catalyzes the attachment of isoleucine to tRNA(Ile). As IleRS can inadvertently accommodate and process structurally similar amino acids such as valine, to avoid such errors it has two additional distinct tRNA(Ile)-dependent editing activities. One activity is designated as 'pretransfer' editing and involves the hydrolysis of activated Val-AMP. The other activity is designated 'posttransfer' editing and involves deacylation of mischarged Val-tRNA(Ile). The polypeptide is Isoleucine--tRNA ligase (Sodalis glossinidius (strain morsitans)).